A 461-amino-acid polypeptide reads, in one-letter code: Porin AaxA (461 aa).

A signal peptide spans 1-22 (MSFRSVLLTALLSLSFTTTMQA).

Belongs to the OprB family.

The protein resides in the cell outer membrane. Its function is as follows. Facilitates L-arginine uptake, as part of the AaxABC system. The arginine uptake by the bacterium in the macrophage may be a virulence factor against the host innate immune response. This Chlamydia trachomatis serovar D (strain ATCC VR-885 / DSM 19411 / UW-3/Cx) protein is Porin AaxA (aaxA).